The following is a 381-amino-acid chain: tRNA N6-adenosine threonylcarbamoyltransferase (381 aa).

His114 and His118 together coordinate Fe cation. Residues 142–146, Asp178, Gly191, Asp195, and Asn321 each bind substrate; that span reads VVSGG. Asp349 lines the Fe cation pocket.

This sequence belongs to the KAE1 / TsaD family. Fe(2+) serves as cofactor.

Its subcellular location is the cytoplasm. The catalysed reaction is L-threonylcarbamoyladenylate + adenosine(37) in tRNA = N(6)-L-threonylcarbamoyladenosine(37) in tRNA + AMP + H(+). Required for the formation of a threonylcarbamoyl group on adenosine at position 37 (t(6)A37) in tRNAs that read codons beginning with adenine. Is involved in the transfer of the threonylcarbamoyl moiety of threonylcarbamoyl-AMP (TC-AMP) to the N6 group of A37, together with TsaE and TsaB. TsaD likely plays a direct catalytic role in this reaction. In Koribacter versatilis (strain Ellin345), this protein is tRNA N6-adenosine threonylcarbamoyltransferase.